A 157-amino-acid chain; its full sequence is UPF0212 protein rrnAC1165 (157 aa).

The tract at residues 105-157 (VLEIEEIPEESDETTEDESSSAESEADADDPPSDQSADESDDVLPEFEELIDE) is disordered. Over residues 106-157 (LEIEEIPEESDETTEDESSSAESEADADDPPSDQSADESDDVLPEFEELIDE) the composition is skewed to acidic residues.

This sequence belongs to the UPF0212 family.

In Haloarcula marismortui (strain ATCC 43049 / DSM 3752 / JCM 8966 / VKM B-1809) (Halobacterium marismortui), this protein is UPF0212 protein rrnAC1165.